Consider the following 639-residue polypeptide: DNA gyrase subunit B (639 aa).

Residues 392-402 (QAEELTRRKSA) are compositionally biased toward basic and acidic residues. The interval 392–417 (QAEELTRRKSALESTSLPGKLADCQS) is disordered. The Toprim domain maps to 423–537 (SELFIVEGDS…AGYVYAAQPP (115 aa)). Residues Glu429, Asp502, and Asp504 each contribute to the Mg(2+) site.

The protein belongs to the type II topoisomerase GyrB family. As to quaternary structure, heterotetramer, composed of two GyrA and two GyrB chains. In the heterotetramer, GyrA contains the active site tyrosine that forms a transient covalent intermediate with DNA, while GyrB binds cofactors and catalyzes ATP hydrolysis. Mg(2+) serves as cofactor. The cofactor is Mn(2+). Requires Ca(2+) as cofactor.

It is found in the cytoplasm. It catalyses the reaction ATP-dependent breakage, passage and rejoining of double-stranded DNA.. In terms of biological role, a type II topoisomerase that negatively supercoils closed circular double-stranded (ds) DNA in an ATP-dependent manner to modulate DNA topology and maintain chromosomes in an underwound state. Negative supercoiling favors strand separation, and DNA replication, transcription, recombination and repair, all of which involve strand separation. Also able to catalyze the interconversion of other topological isomers of dsDNA rings, including catenanes and knotted rings. Type II topoisomerases break and join 2 DNA strands simultaneously in an ATP-dependent manner. The chain is DNA gyrase subunit B from Haloferax lucentense (strain DSM 14919 / JCM 9276 / NCIMB 13854 / Aa 2.2) (Haloferax alicantei).